A 493-amino-acid chain; its full sequence is Alpha-amylase-related protein (493 aa).

The signal sequence occupies residues 1 to 19; sequence MFKLALTLTLCLAGSLSLA. Position 20 is a pyrrolidone carboxylic acid (glutamine 20). Cysteine 47 and cysteine 103 are oxidised to a cystine. Ca(2+) contacts are provided by asparagine 117, glutamine 168, and aspartate 177. A disulfide bond links cysteine 156 and cysteine 170. Chloride is bound at residue arginine 205. The Nucleophile role is filled by aspartate 207. Histidine 211 contributes to the Ca(2+) binding site. Glutamate 244 (proton donor) is an active-site residue. Chloride contacts are provided by asparagine 307 and arginine 342. Cystine bridges form between cysteine 375-cysteine 381, cysteine 417-cysteine 440, and cysteine 447-cysteine 459.

The protein belongs to the glycosyl hydrolase 13 family. In terms of assembly, monomer. The cofactor is Ca(2+). Requires chloride as cofactor.

It localises to the secreted. The enzyme catalyses Endohydrolysis of (1-&gt;4)-alpha-D-glucosidic linkages in polysaccharides containing three or more (1-&gt;4)-alpha-linked D-glucose units.. The chain is Alpha-amylase-related protein (Amyrel) from Drosophila yakuba (Fruit fly).